The sequence spans 185 residues: Large ribosomal subunit protein uL5c (185 aa).

It belongs to the universal ribosomal protein uL5 family. In terms of assembly, part of the 50S ribosomal subunit; contacts the 5S rRNA.

It is found in the plastid. It localises to the chloroplast. Binds 5S rRNA, forms part of the central protuberance of the 50S subunit. The polypeptide is Large ribosomal subunit protein uL5c (rpl5) (Chlorokybus atmophyticus (Soil alga)).